The following is a 316-amino-acid chain: Beta-ketoacyl-[acyl-carrier-protein] synthase III (316 aa).

Active-site residues include Cys-112 and His-243. Residues 244–248 (QANLR) form an ACP-binding region. Asn-273 is an active-site residue.

Belongs to the thiolase-like superfamily. FabH family. As to quaternary structure, homodimer.

The protein localises to the cytoplasm. The catalysed reaction is malonyl-[ACP] + acetyl-CoA + H(+) = 3-oxobutanoyl-[ACP] + CO2 + CoA. It participates in lipid metabolism; fatty acid biosynthesis. Its function is as follows. Catalyzes the condensation reaction of fatty acid synthesis by the addition to an acyl acceptor of two carbons from malonyl-ACP. Catalyzes the first condensation reaction which initiates fatty acid synthesis and may therefore play a role in governing the total rate of fatty acid production. Possesses both acetoacetyl-ACP synthase and acetyl transacylase activities. Its substrate specificity determines the biosynthesis of branched-chain and/or straight-chain of fatty acids. This chain is Beta-ketoacyl-[acyl-carrier-protein] synthase III, found in Histophilus somni (strain 2336) (Haemophilus somnus).